The sequence spans 437 residues: Regulator of phospholipase D SRF1 (437 aa).

Positions 1–24 (MGDSNSSQEAYSDTTSTNASRIAD) are disordered. The Cytoplasmic portion of the chain corresponds to 1–267 (MGDSNSSQEA…LTSLLLDNQY (267 aa)). Phosphoserine is present on residues Ser-45 and Ser-167. The chain crosses the membrane as a helical span at residues 268–288 (LILGLRIFTGILSCISLALAI). The Extracellular portion of the chain corresponds to 289 to 308 (KIFQNSRSNNTISESKIGQQ). An N-linked (GlcNAc...) asparagine glycan is attached at Asn-297. Residues 309-329 (PSTIMAICVNAVAIAYIIYIA) traverse the membrane as a helical segment. The Cytoplasmic portion of the chain corresponds to 330-348 (HDEFAGKPVGLRNPLSKLK). A helical membrane pass occupies residues 349–369 (LILLDLLFIIFSSANLALAFN). The Extracellular portion of the chain corresponds to 370–403 (TRFDKEWVCTSIRRSNGSTYGYPKIPRICRKQEA). Residue Asn-385 is glycosylated (N-linked (GlcNAc...) asparagine). Residues 404–424 (LSAFLFVALFMWVITFSISIV) form a helical membrane-spanning segment. The Cytoplasmic segment spans residues 425–437 (RVVEKVSSITNRN).

As to quaternary structure, interacts with SPO14.

The protein resides in the membrane. Its function is as follows. Regulator of phospholipase D (SPO14) which is required for SPO14 catalytic activity in mitotic cells. Essential to buffer the toxic effects of C16:0 platelet activating factor. The sequence is that of Regulator of phospholipase D SRF1 (SRF1) from Saccharomyces cerevisiae (strain ATCC 204508 / S288c) (Baker's yeast).